The sequence spans 96 residues: MIMFLYSSFSMILFILGLFCFVSNRKHLLSMLLSLEFIVLILFFMLFIYLNLMNYENYFSMMFLTFSVCEGALGLSILVSMIRTHGNDYFQSFSIM.

3 helical membrane passes run 2 to 22, 28 to 48, and 62 to 82; these read IMFL…FCFV, LLSM…MLFI, and MFLT…VSMI.

It belongs to the complex I subunit 4L family.

Its subcellular location is the mitochondrion membrane. It catalyses the reaction a ubiquinone + NADH + 5 H(+)(in) = a ubiquinol + NAD(+) + 4 H(+)(out). Its function is as follows. Core subunit of the mitochondrial membrane respiratory chain NADH dehydrogenase (Complex I) that is believed to belong to the minimal assembly required for catalysis. Complex I functions in the transfer of electrons from NADH to the respiratory chain. The immediate electron acceptor for the enzyme is believed to be ubiquinone. The protein is NADH-ubiquinone oxidoreductase chain 4L (mt:ND4L) of Drosophila nasuta F (Fruit fly).